The following is a 301-amino-acid chain: Cytidine deaminase 1 (301 aa).

CMP/dCMP-type deaminase domains follow at residues 23–156 (SVIQ…FGPD) and 188–301 (DSSA…CYEA). A substrate-binding site is contributed by 64–66 (NVE). H77 contacts Zn(2+). E79 functions as the Proton donor in the catalytic mechanism. Positions 104 and 107 each coordinate Zn(2+).

Belongs to the cytidine and deoxycytidylate deaminase family. Homodimer. Requires Zn(2+) as cofactor. Expressed in roots, rosette leaves, stems and flowers.

It catalyses the reaction cytidine + H2O + H(+) = uridine + NH4(+). The catalysed reaction is 2'-deoxycytidine + H2O + H(+) = 2'-deoxyuridine + NH4(+). Its activity is regulated as follows. Inhibited by uridine, CMP and dCMP. This enzyme scavenges exogenous and endogenous cytidine and 2'-deoxycytidine for UMP synthesis. Functions as a conventional cytidine deaminase. Has no affinity for RNA and is not involved in RNA-editing by C-to-U deamination. This is Cytidine deaminase 1 (CDA1) from Arabidopsis thaliana (Mouse-ear cress).